A 102-amino-acid polypeptide reads, in one-letter code: MESQNIRIRLKAFDHRVLDQSTREIVSTAKRTGAQVRGPIPLPTRIEKFTVNRSPHIDKKSREQFEIRTHKRLLDIVDPTPQTVDALMKLDLAAGVDVEIKL.

It belongs to the universal ribosomal protein uS10 family. In terms of assembly, part of the 30S ribosomal subunit.

Involved in the binding of tRNA to the ribosomes. The chain is Small ribosomal subunit protein uS10 from Rhodospirillum rubrum (strain ATCC 11170 / ATH 1.1.1 / DSM 467 / LMG 4362 / NCIMB 8255 / S1).